Here is a 148-residue protein sequence, read N- to C-terminus: Holo-[acyl-carrier-protein] synthase (148 aa).

Asp8 and Glu57 together coordinate Mg(2+).

Belongs to the P-Pant transferase superfamily. AcpS family. It depends on Mg(2+) as a cofactor.

The protein localises to the cytoplasm. The catalysed reaction is apo-[ACP] + CoA = holo-[ACP] + adenosine 3',5'-bisphosphate + H(+). In terms of biological role, transfers the 4'-phosphopantetheine moiety from coenzyme A to a Ser of acyl-carrier-protein. This chain is Holo-[acyl-carrier-protein] synthase, found in Ruegeria pomeroyi (strain ATCC 700808 / DSM 15171 / DSS-3) (Silicibacter pomeroyi).